A 635-amino-acid polypeptide reads, in one-letter code: Dihydrolipoyllysine-residue acetyltransferase component of pyruvate dehydrogenase complex, mitochondrial (635 aa).

Positions 83-160 constitute a Lipoyl-binding 1 domain; that stretch reads GKEITMPALS…EINKPIAIIV (78 aa). Lysine 124 is subject to N6-lipoyllysine. Residues 171–204 form a disordered region; it reads KNYKPSSQASSTPVQEEAPKPKQEAPKKSTKTYP. The segment covering 174–184 has biased composition (polar residues); sequence KPSSQASSTPV. The segment covering 187–197 has biased composition (basic and acidic residues); it reads EAPKPKQEAPK. A Lipoyl-binding 2 domain is found at 206–283; that stretch reads HKVVGMPALS…QINQPVCIIV (78 aa). Lysine 247 carries the post-translational modification N6-lipoyllysine. The tract at residues 295-338 is disordered; the sequence is YSVEEQSSSSSSSSQESTPSSSSSSSQESTPSQSSSQQTTRKSG. A compositionally biased stretch (low complexity) spans 298-334; that stretch reads EEQSSSSSSSSQESTPSSSSSSSQESTPSQSSSQQTT. Positions 342–379 constitute a Peripheral subunit-binding (PSBD) domain; it reads FATPAARFEASSKGYDLSAINGTGPNNRILKADVLEFV. A disordered region spans residues 382–413; sequence KQEVAQQQQQQTTTTTKKPTTPTSSGEFTDIP. Positions 387 to 404 are enriched in low complexity; it reads QQQQQQTTTTTKKPTTPT. Residues 403–635 form a catalytic region; that stretch reads PTSSGEFTDI…YVENPIKLIL (233 aa).

Belongs to the 2-oxoacid dehydrogenase family. As to quaternary structure, 20 to 30 alpha(2)-beta(2) tetramers of E1 + 6 homodimers of E3 + 60 copies of E2. Requires (R)-lipoate as cofactor.

It is found in the mitochondrion matrix. It carries out the reaction N(6)-[(R)-dihydrolipoyl]-L-lysyl-[protein] + acetyl-CoA = N(6)-[(R)-S(8)-acetyldihydrolipoyl]-L-lysyl-[protein] + CoA. Functionally, the pyruvate dehydrogenase complex catalyzes the overall conversion of pyruvate to acetyl-CoA and CO(2). It contains multiple copies of three enzymatic components: pyruvate dehydrogenase (E1), dihydrolipoamide acetyltransferase (E2) and lipoamide dehydrogenase (E3). This chain is Dihydrolipoyllysine-residue acetyltransferase component of pyruvate dehydrogenase complex, mitochondrial (pdhC), found in Dictyostelium discoideum (Social amoeba).